The primary structure comprises 81 residues: Photosystem I iron-sulfur center (81 aa).

2 4Fe-4S ferredoxin-type domains span residues 2 to 31 (AHIV…MVPW) and 39 to 68 (MASA…VRVY). [4Fe-4S] cluster-binding residues include Cys-11, Cys-14, Cys-17, Cys-21, Cys-48, Cys-51, Cys-54, and Cys-58.

As to quaternary structure, the eukaryotic PSI reaction center is composed of at least 11 subunits. It depends on [4Fe-4S] cluster as a cofactor.

The protein localises to the plastid. It localises to the chloroplast thylakoid membrane. The enzyme catalyses reduced [plastocyanin] + hnu + oxidized [2Fe-2S]-[ferredoxin] = oxidized [plastocyanin] + reduced [2Fe-2S]-[ferredoxin]. Functionally, apoprotein for the two 4Fe-4S centers FA and FB of photosystem I (PSI); essential for photochemical activity. FB is the terminal electron acceptor of PSI, donating electrons to ferredoxin. The C-terminus interacts with PsaA/B/D and helps assemble the protein into the PSI complex. Required for binding of PsaD and PsaE to PSI. PSI is a plastocyanin/cytochrome c6-ferredoxin oxidoreductase, converting photonic excitation into a charge separation, which transfers an electron from the donor P700 chlorophyll pair to the spectroscopically characterized acceptors A0, A1, FX, FA and FB in turn. This chain is Photosystem I iron-sulfur center, found in Chlamydomonas reinhardtii (Chlamydomonas smithii).